Consider the following 692-residue polypeptide: Transforming growth factor beta activator LRRC33 (692 aa).

The first 18 residues, 1 to 18 (MELLPLWLCLGFHFLTVG), serve as a signal peptide directing secretion. Topologically, residues 19 to 650 (WRNRSGTATA…CKWERLDLGL (632 aa)) are extracellular. An N-linked (GlcNAc...) asparagine glycan is attached at asparagine 21. One can recognise an LRRNT domain in the interval 29 to 56 (ASQGVCKLVGGAADCRGQSLASVPSSLP). LRR repeat units lie at residues 58-79 (HARM…SLQP), 82-103 (LLES…AFQE), 106-127 (HLRS…TAAA), 133-155 (GLRR…MLQN), 158-179 (SLRS…VFEG), 182-203 (RLRE…AFDG), 206-227 (ELRH…GLTR), 228-239 (LRVLNVSYNVLE), 251-272 (ELET…PQYS), and 273-294 (KLRT…YNTS). A glycan (N-linked (GlcNAc...) asparagine) is linked at asparagine 74. The N-linked (GlcNAc...) asparagine glycan is linked to asparagine 155. The N-linked (GlcNAc...) asparagine glycan is linked to asparagine 232. Residues asparagine 292, asparagine 309, and asparagine 312 are each glycosylated (N-linked (GlcNAc...) asparagine). LRR repeat units lie at residues 329–350 (DLRF…FLRK), 353–374 (SLSH…EHEP), 377–398 (ALTE…PGLA), 403–424 (SLRL…LFAN), 427–447 (NITT…PAAS), 463–484 (SLRS…PFQG), 486–507 (SLTY…APLQ), 512–534 (MLQV…DFSG), 537–558 (NLRD…GGSL), 559–580 (ALET…AVSE), and 585–594 (GLRTIYLSQN). Residues asparagine 408 and asparagine 427 are each glycosylated (N-linked (GlcNAc...) asparagine). Asparagine 500 is a glycosylation site (N-linked (GlcNAc...) asparagine). The region spanning 595–643 (PYDCCGVDGWGALQHGQTVADWAMVTCNLSSKIIRVTELPGGVPRDCKW) is the LRRCT domain. An N-linked (GlcNAc...) asparagine glycan is attached at asparagine 622. Residues 651–671 (LYLVLILPSCLTLLVACTVIV) traverse the membrane as a helical segment. At 672–692 (LTFKKPLLQVIKSRCHWSSVY) the chain is on the cytoplasmic side.

The protein belongs to the LRRC32/LRRC33 family. In terms of assembly, interacts with TGFB1; associates via disulfide bonds with the Latency-associated peptide chain (LAP) regulatory chain of TGFB1, leading to regulate activation of TGF-beta-1. Interacts (via LRR repeats) with TLR2, TLR3, TLR4, TLR9 and probably other Toll-like receptors. Interacts with CYBB/NOX2; the interaction is direct. Mainly expressed in cells of hematopoietic origin. Highly expressed in bone marrow, thymus, liver, lung, intestine and spleen. In the brain, highly expressed in microglia.

The protein localises to the cell membrane. Its subcellular location is the endoplasmic reticulum membrane. In terms of biological role, key regulator of transforming growth factor beta-1 (TGFB1) specifically required for microglia function in the nervous system. Required for activation of latent TGF-beta-1 in macrophages and microglia: associates specifically via disulfide bonds with the Latency-associated peptide (LAP), which is the regulatory chain of TGFB1, and regulates integrin-dependent activation of TGF-beta-1. TGF-beta-1 activation mediated by LRRC33/NRROS is highly localized: there is little spreading of TGF-beta-1 activated from one microglial cell to neighboring microglia, suggesting the existence of localized and selective activation of TGF-beta-1 by LRRC33/NRROS. Indirectly plays a role in Toll-like receptor (TLR) signaling: ability to inhibit TLR-mediated NF-kappa-B activation and cytokine production is probably a consequence of its role in TGF-beta-1 signaling. The sequence is that of Transforming growth factor beta activator LRRC33 from Homo sapiens (Human).